The sequence spans 1018 residues: Thrombospondin type-1 domain-containing protein 4 (1018 aa).

A signal peptide spans 1–26 (MVSYLTSCLSALSTLLLLLGSQLVCP). Disordered regions lie at residues 34–56 (KVPQ…SPGV), 116–240 (HRSQ…PSEA), and 534–623 (SPQV…NWKQ). The 254-residue stretch at 54-307 (PGVWGSWGPW…YKLCNTNACP (254 aa)) folds into the TSP type-1 1 domain. A compositionally biased stretch (basic residues) spans 187–199 (QRLRRQRPSSRHS). Positions 216–230 (HQFSHSQPLYQSDSG) are enriched in polar residues. Composition is skewed to basic and acidic residues over residues 558–573 (QEDR…KEDS) and 592–603 (RHPERFPSHRPD). 5 TSP type-1 domains span residues 676-737 (CPAF…KICS), 739-792 (WQIR…DMGP), 793-851 (CAKS…GPCT), 852-911 (GKVE…HLKP), and 912-968 (CGAK…QDCV). The 38-residue stretch at 971-1008 (VDENCKDKYYNCNVVVQARLCVYNYYKTACCASCTRVA) folds into the PLAC domain.

Isoform 2 interacts with FBN1. Isoform 2 may interact with TGFB1. As to expression, both isoforms are expressed in the embryo from 7 dpc through 17. Isoform 1 is widely expressed in adult tissues. Isoform 2 is detected in brain, spinal cord, eye, kidney, stomach and uterus. Mainly observed in fibrillar extracellular matrices in elastic tissues (at protein level).

The protein resides in the secreted. It localises to the extracellular space. It is found in the extracellular matrix. Functionally, promotes FBN1 matrix assembly. Attenuates TGFB signaling, possibly by accelerating the sequestration of large latent complexes of TGFB or active TGFB by FBN1 microfibril assembly, thereby negatively regulating the expression of TGFB regulatory targets, such as POSTN. In Mus musculus (Mouse), this protein is Thrombospondin type-1 domain-containing protein 4 (Thsd4).